The following is a 180-amino-acid chain: Large ribosomal subunit protein uL6 (180 aa).

The protein belongs to the universal ribosomal protein uL6 family. Part of the 50S ribosomal subunit.

Its function is as follows. This protein binds to the 23S rRNA, and is important in its secondary structure. It is located near the subunit interface in the base of the L7/L12 stalk, and near the tRNA binding site of the peptidyltransferase center. In Anaeromyxobacter sp. (strain K), this protein is Large ribosomal subunit protein uL6.